The following is a 118-amino-acid chain: MARIAGVNLPAQKHVWVGLQSIYGIGRTRSKKVCEVAGVASTTKIRDLSEPEIERLRAEVGKYIVEGDLRREIGIAIKRLMDLGCYRGLRHRRGLPLRGQRTRTNARTRKGPRKAIRK.

Residues glycine 94–lysine 118 form a disordered region.

Belongs to the universal ribosomal protein uS13 family. In terms of assembly, part of the 30S ribosomal subunit. Forms a loose heterodimer with protein S19. Forms two bridges to the 50S subunit in the 70S ribosome.

Functionally, located at the top of the head of the 30S subunit, it contacts several helices of the 16S rRNA. In the 70S ribosome it contacts the 23S rRNA (bridge B1a) and protein L5 of the 50S subunit (bridge B1b), connecting the 2 subunits; these bridges are implicated in subunit movement. Contacts the tRNAs in the A and P-sites. The chain is Small ribosomal subunit protein uS13 from Stenotrophomonas maltophilia (strain R551-3).